The primary structure comprises 393 residues: S-adenosylmethionine synthase 4 (393 aa).

Position 9 (Glu-9) interacts with Mg(2+). His-15 serves as a coordination point for ATP. K(+) is bound at residue Glu-43. L-methionine-binding residues include Glu-56 and Gln-99. Residues 167–169, 235–238, Asp-246, 252–253, Ala-269, Lys-273, and Lys-277 contribute to the ATP site; these read DGK, SGRF, and RK. An L-methionine-binding site is contributed by Asp-246. Lys-277 is a binding site for L-methionine.

Belongs to the AdoMet synthase family. In terms of assembly, homotetramer. Mn(2+) serves as cofactor. It depends on Mg(2+) as a cofactor. The cofactor is Co(2+). Requires K(+) as cofactor.

The protein localises to the cytoplasm. It catalyses the reaction L-methionine + ATP + H2O = S-adenosyl-L-methionine + phosphate + diphosphate. It functions in the pathway amino-acid biosynthesis; S-adenosyl-L-methionine biosynthesis; S-adenosyl-L-methionine from L-methionine: step 1/1. In terms of biological role, catalyzes the formation of S-adenosylmethionine from methionine and ATP. The reaction comprises two steps that are both catalyzed by the same enzyme: formation of S-adenosylmethionine (AdoMet) and triphosphate, and subsequent hydrolysis of the triphosphate. The polypeptide is S-adenosylmethionine synthase 4 (METK4) (Vitis vinifera (Grape)).